The chain runs to 468 residues: 3-isopropylmalate dehydratase large subunit (468 aa).

Residues Cys-349, Cys-409, and Cys-412 each coordinate [4Fe-4S] cluster.

Belongs to the aconitase/IPM isomerase family. LeuC type 1 subfamily. Heterodimer of LeuC and LeuD. [4Fe-4S] cluster is required as a cofactor.

The catalysed reaction is (2R,3S)-3-isopropylmalate = (2S)-2-isopropylmalate. It functions in the pathway amino-acid biosynthesis; L-leucine biosynthesis; L-leucine from 3-methyl-2-oxobutanoate: step 2/4. Its function is as follows. Catalyzes the isomerization between 2-isopropylmalate and 3-isopropylmalate, via the formation of 2-isopropylmaleate. The chain is 3-isopropylmalate dehydratase large subunit from Nitrobacter winogradskyi (strain ATCC 25391 / DSM 10237 / CIP 104748 / NCIMB 11846 / Nb-255).